We begin with the raw amino-acid sequence, 274 residues long: Large ribosomal subunit protein uL2 (274 aa).

Disordered stretches follow at residues 35 to 60 (EPQHQKSGRNNNGHITTRHKGGGHKH) and 224 to 274 (VMNP…RRKK). Positions 50–60 (TTRHKGGGHKH) are enriched in basic residues. Residues 229-246 (DHPHGGGEGKTGEGRHAV) are compositionally biased toward basic and acidic residues.

The protein belongs to the universal ribosomal protein uL2 family. Part of the 50S ribosomal subunit. Forms a bridge to the 30S subunit in the 70S ribosome.

Its function is as follows. One of the primary rRNA binding proteins. Required for association of the 30S and 50S subunits to form the 70S ribosome, for tRNA binding and peptide bond formation. It has been suggested to have peptidyltransferase activity; this is somewhat controversial. Makes several contacts with the 16S rRNA in the 70S ribosome. The polypeptide is Large ribosomal subunit protein uL2 (Delftia acidovorans (strain DSM 14801 / SPH-1)).